The primary structure comprises 224 residues: Ribonuclease 3 (224 aa).

The 123-residue stretch at 4–126 (LDRLQRQISY…IIGAISLDSS (123 aa)) folds into the RNase III domain. Residue Glu-39 coordinates Mg(2+). The active site involves Asp-43. 2 residues coordinate Mg(2+): Asp-112 and Glu-115. Glu-115 is an active-site residue. The DRBM domain occupies 153–223 (DPKTRLQEYL…AEQILTALEI (71 aa)).

It belongs to the ribonuclease III family. Homodimer. The cofactor is Mg(2+).

It is found in the cytoplasm. The catalysed reaction is Endonucleolytic cleavage to 5'-phosphomonoester.. Digests double-stranded RNA. Involved in the processing of primary rRNA transcript to yield the immediate precursors to the large and small rRNAs (23S and 16S). Processes some mRNAs, and tRNAs when they are encoded in the rRNA operon. Processes pre-crRNA and tracrRNA of type II CRISPR loci if present in the organism. The protein is Ribonuclease 3 of Mannheimia succiniciproducens (strain KCTC 0769BP / MBEL55E).